Reading from the N-terminus, the 384-residue chain is Class V chitinase CHIT5a (384 aa).

An N-terminal signal peptide occupies residues 1–27 (MAVQKIIITPILVFLVTIFFNVSSSSS). N-linked (GlcNAc...) asparagine glycosylation is found at asparagine 29, asparagine 114, and asparagine 133. In terms of domain architecture, GH18 spans 39–384 (GVRSAYWPAG…SKQASNAWGH (346 aa)). Residue glutamate 152 is the Proton donor of the active site. N-linked (GlcNAc...) asparagine glycosylation is found at asparagine 195 and asparagine 234.

The protein belongs to the glycosyl hydrolase 18 family. Chitinase class V subfamily.

It carries out the reaction Random endo-hydrolysis of N-acetyl-beta-D-glucosaminide (1-&gt;4)-beta-linkages in chitin and chitodextrins.. The protein operates within glycan degradation; chitin degradation. Functionally, possesses chitinase activity in vitro toward glycol chitin, carboxymethyl-chitin, colloidal chitin, and the chitin oligosaccharides (N-acetylglucosamine) (GlcNAc)6 and (GlcNAc)5. Hydrolyzes (GlcNAc)6 into (GlcNAc)4 and (GlcNAc)2, or two (GlcNAc)3 molecules. Has the capacity to inhibit hyphal growth of the fungus Trichoderma viride in an agar-plate bioassay. The polypeptide is Class V chitinase CHIT5a (Medicago truncatula (Barrel medic)).